A 489-amino-acid chain; its full sequence is WRKY transcription factor 72B (489 aa).

3 disordered regions span residues 1–100 (MENK…EMRE), 131–159 (QKETDQKSSSTTVNTSTTHHDHESDQEAD), and 234–267 (DENEETSNKNLKTMRNNGDGDDVSQQNPTKRARV). 2 stretches are compositionally biased toward basic and acidic residues: residues 32-52 (GRKEREDDKSKPSSPHHKDYM) and 83-100 (THKEQDDQLASAKDEMRE). A coiled-coil region spans residues 84-132 (HKEQDDQLASAKDEMREVMEENQRLRMHLDRMMKEYRNLQNQFHDIVQK). The span at 138–147 (SSSTTVNTST) shows a compositional bias: low complexity. A DNA-binding region (WRKY) is located at residues 273 to 339 (CDAPTMNDGC…YEGTHNHTLP (67 aa)). 2 disordered regions span residues 356–381 (LLSGSSNSSDPNPQVTATTTTTPTTT) and 427–454 (TSTSSSSPSSLSHLNRMTQNFPPRYNYN). Low complexity-rich tracts occupy residues 371–381 (TATTTTTPTTT) and 427–438 (TSTSSSSPSSLS).

The protein belongs to the WRKY group II-b family.

The protein localises to the nucleus. In terms of biological role, in association with WRKY72A, contributes to basal defense against root-knot nematodes (RKNs) and potato aphids, as well as Mi-1-mediated gene-for-gene resistance to these pests. Both WRKY72A and WRKY72B are not required for gene-for-gene resistance mediated by Pto, another tomato R gene. The protein is WRKY transcription factor 72B of Solanum lycopersicum (Tomato).